We begin with the raw amino-acid sequence, 480 residues long: MTVTKMSWRPQYRCSKFRNVYGKVASRENCYDCIPITKNVHDNHFCAVNPKFLAIVTETAGGGSFLVIPLQQTGRIEPNYPKVCGHQGTVLDIKWNPFIENIIASCSEDTSVRIWEIPDGGLKRNMSEAVLELYGHSRRVGLIEWHPTAINILFSAGYDYKILIWNLDIGEAVKMIDCHRDVILCMSFNTDGSLLATTCKDKKLRVLEPRSGRVLQETACKTHKVTRVVFLGDMKRLFTTGVSKWNTRQMALWDQEDLSMPVTEEEIDGLSGLLFPFYDADTHMLYLAGKGDGNIRYYEITAEKPYLTYLMEFRSPAPQKGLGVMPKHGLDVSACEIFRFYKLITLKNQIEPISMIVPRRSENYQEDIYPMTSGTEPALRPEEWLRGVNKGPVLMSLKEGYRKENKAIFIAPVKEKKSLVVNGIDLLENVPPRTENELLRMFFRQQEEIRRLKEQLSQRDLLVRQLELELKNLRNSPKDS.

WD repeat units follow at residues 85–125, 135–177, 179–217, 220–263, and 265–308; these read GHQG…LKRN, GHSR…KMID, HRDVILCMSFNTDGSLLATTCKDKKLRVLEPRSGRVLQE, CKTH…MPVT, and EEID…PYLT. Residues 436–475 adopt a coiled-coil conformation; that stretch reads NELLRMFFRQQEEIRRLKEQLSQRDLLVRQLELELKNLRN.

Belongs to the WD repeat coronin family.

It is found in the cytoplasm. It localises to the cytoskeleton. In terms of biological role, may play a role in the reorganization of neuronal actin structure. This Xenopus tropicalis (Western clawed frog) protein is Coronin-2B (coro2b).